Reading from the N-terminus, the 530-residue chain is Light-harvesting complex I LH38 proteins (530 aa).

It is found in the plastid. It localises to the chloroplast. The protein is Light-harvesting complex I LH38 proteins of Euglena gracilis.